Consider the following 272-residue polypeptide: MRDYKLVVLGAGGVGKSCLTVQFVQGVYLDTYDPTIEDSYRKTIEIDNKVFDLEILDTAGIAQFTAMRELYIKSGMGFLLVYSVTDRQSLEELMELREQVLRIKDSDRVPMVLIGNKADLINERVISVEEGIEVSSKWGRVPFYETSALLRSNVDEVFVDLVRQIIRNEMESVAVKDARNQSQQFSKIESPSTRLPSSAKQDTKQSNNKQSSKGLYNKSSQGQAKVKQSTPVNEKHKPSHAVPKSGSSNRTGISATSQQKKKKKNASTCTIL.

Residue 10 to 17 (GAGGVGKS) participates in GTP binding. Residues 32–40 (YDPTIEDSY) carry the Effector region motif. Residues 57 to 61 (DTAGI) and 116 to 119 (NKAD) each bind GTP. A disordered region spans residues 177 to 272 (DARNQSQQFS…KKNASTCTIL (96 aa)). 2 stretches are compositionally biased toward polar residues: residues 180–232 (NQSQ…STPV) and 245–258 (SGSSNRTGISATSQ). At Cys-269 the chain carries Cysteine methyl ester. Cys-269 carries S-geranylgeranyl cysteine lipidation. Residues 270–272 (TIL) constitute a propeptide, removed in mature form.

It belongs to the small GTPase superfamily. Ras family.

It is found in the cell membrane. It catalyses the reaction GTP + H2O = GDP + phosphate + H(+). Alternates between an inactive form bound to GDP and an active form bound to GTP. Activated by a guanine nucleotide-exchange factor (GEF) and inactivated by a GTPase-activating protein (GAP). Ras-related protein which binds GDP/GTP and possesses intrinsic GTPase activity. Involved in development of cell polarity during the cell division cycle, and essential for bud emergence. This is Ras-related protein RSR1 from Saccharomyces cerevisiae (strain ATCC 204508 / S288c) (Baker's yeast).